A 1220-amino-acid polypeptide reads, in one-letter code: DNA-directed RNA polymerase subunit beta' (1220 aa).

4 residues coordinate Zn(2+): cysteine 60, cysteine 62, cysteine 75, and cysteine 78. Mg(2+)-binding residues include aspartate 449, aspartate 451, and aspartate 453. The Zn(2+) site is built by cysteine 818, cysteine 892, cysteine 899, and cysteine 902.

This sequence belongs to the RNA polymerase beta' chain family. In terms of assembly, the RNAP catalytic core consists of 2 alpha, 1 beta, 1 beta' and 1 omega subunit. When a sigma factor is associated with the core the holoenzyme is formed, which can initiate transcription. Requires Mg(2+) as cofactor. Zn(2+) serves as cofactor.

It carries out the reaction RNA(n) + a ribonucleoside 5'-triphosphate = RNA(n+1) + diphosphate. In terms of biological role, DNA-dependent RNA polymerase catalyzes the transcription of DNA into RNA using the four ribonucleoside triphosphates as substrates. This chain is DNA-directed RNA polymerase subunit beta', found in Lacticaseibacillus paracasei (strain ATCC 334 / BCRC 17002 / CCUG 31169 / CIP 107868 / KCTC 3260 / NRRL B-441) (Lactobacillus paracasei).